A 156-amino-acid chain; its full sequence is Arginine repressor (156 aa).

The protein belongs to the ArgR family.

Its subcellular location is the cytoplasm. Its pathway is amino-acid biosynthesis; L-arginine biosynthesis [regulation]. Its function is as follows. Regulates arginine biosynthesis genes. The sequence is that of Arginine repressor from Cronobacter sakazakii (strain ATCC BAA-894) (Enterobacter sakazakii).